Here is a 432-residue protein sequence, read N- to C-terminus: uncharacterized protein (432 aa).

SIS domains are found at residues 105 to 244 and 277 to 422; these read WLTE…DLVS and CDKK…VDLP.

This is an uncharacterized protein from Saccharomyces cerevisiae (strain Lalvin EC1118 / Prise de mousse) (Baker's yeast).